The following is a 503-amino-acid chain: Putative aldehyde dehydrogenase-like protein C9E9.09c (503 aa).

247-252 provides a ligand contact to NAD(+); sequence GSTGVG. The residue at position 248 (Ser248) is a Phosphoserine. The active-site Proton acceptor is Glu270. Residue Cys304 is the Nucleophile of the active site. At Ser501 the chain carries Phosphoserine.

Belongs to the aldehyde dehydrogenase family.

The sequence is that of Putative aldehyde dehydrogenase-like protein C9E9.09c from Schizosaccharomyces pombe (strain 972 / ATCC 24843) (Fission yeast).